Reading from the N-terminus, the 277-residue chain is Putative phosphoenolpyruvate synthase regulatory protein (277 aa).

157–164 (GVSRCGKT) contacts ADP.

The protein belongs to the pyruvate, phosphate/water dikinase regulatory protein family. PSRP subfamily.

The catalysed reaction is [pyruvate, water dikinase] + ADP = [pyruvate, water dikinase]-phosphate + AMP + H(+). It catalyses the reaction [pyruvate, water dikinase]-phosphate + phosphate + H(+) = [pyruvate, water dikinase] + diphosphate. Its function is as follows. Bifunctional serine/threonine kinase and phosphorylase involved in the regulation of the phosphoenolpyruvate synthase (PEPS) by catalyzing its phosphorylation/dephosphorylation. This is Putative phosphoenolpyruvate synthase regulatory protein from Erwinia tasmaniensis (strain DSM 17950 / CFBP 7177 / CIP 109463 / NCPPB 4357 / Et1/99).